Here is a 471-residue protein sequence, read N- to C-terminus: L-lysine 2,3-aminomutase (471 aa).

In terms of domain architecture, Radical SAM core spans 120–332; it reads HRYPDRVLFL…GLRGHTSGYA (213 aa). [4Fe-4S] cluster contacts are provided by Cys134, Cys138, and Cys141. At Lys346 the chain carries N6-(pyridoxal phosphate)lysine.

This sequence belongs to the radical SAM superfamily. KamA family. As to quaternary structure, homotetramer. [4Fe-4S] cluster is required as a cofactor. It depends on pyridoxal 5'-phosphate as a cofactor.

It carries out the reaction L-lysine = (3S)-3,6-diaminohexanoate. Its pathway is amino-acid degradation; L-lysine degradation via acetate pathway. Its function is as follows. Catalyzes the interconversion of L-alpha-lysine and L-beta-lysine. This Bacillus subtilis (strain 168) protein is L-lysine 2,3-aminomutase (kamA).